The following is a 444-amino-acid chain: Methylenetetrahydrofolate--tRNA-(uracil-5-)-methyltransferase TrmFO (444 aa).

An FAD-binding site is contributed by 9–14; it reads GAGMAG.

Belongs to the MnmG family. TrmFO subfamily. Requires FAD as cofactor.

Its subcellular location is the cytoplasm. It catalyses the reaction uridine(54) in tRNA + (6R)-5,10-methylene-5,6,7,8-tetrahydrofolate + NADH + H(+) = 5-methyluridine(54) in tRNA + (6S)-5,6,7,8-tetrahydrofolate + NAD(+). It carries out the reaction uridine(54) in tRNA + (6R)-5,10-methylene-5,6,7,8-tetrahydrofolate + NADPH + H(+) = 5-methyluridine(54) in tRNA + (6S)-5,6,7,8-tetrahydrofolate + NADP(+). Catalyzes the folate-dependent formation of 5-methyl-uridine at position 54 (M-5-U54) in all tRNAs. This is Methylenetetrahydrofolate--tRNA-(uracil-5-)-methyltransferase TrmFO from Cereibacter sphaeroides (strain ATCC 17029 / ATH 2.4.9) (Rhodobacter sphaeroides).